A 431-amino-acid chain; its full sequence is Glutamyl-tRNA(Gln) amidotransferase subunit A (431 aa).

Catalysis depends on charge relay system residues K37 and S112. S136 (acyl-ester intermediate) is an active-site residue.

Belongs to the amidase family. GatA subfamily. Heterotrimer of A, B and C subunits.

It carries out the reaction L-glutamyl-tRNA(Gln) + L-glutamine + ATP + H2O = L-glutaminyl-tRNA(Gln) + L-glutamate + ADP + phosphate + H(+). Allows the formation of correctly charged Gln-tRNA(Gln) through the transamidation of misacylated Glu-tRNA(Gln) in organisms which lack glutaminyl-tRNA synthetase. The reaction takes place in the presence of glutamine and ATP through an activated gamma-phospho-Glu-tRNA(Gln). This is Glutamyl-tRNA(Gln) amidotransferase subunit A from Methanospirillum hungatei JF-1 (strain ATCC 27890 / DSM 864 / NBRC 100397 / JF-1).